Reading from the N-terminus, the 283-residue chain is MASETASASQWVSPSSRPQHIEQLISGVDRYNPQNLDVLHDYLAQQLDDGSYDLLANLAILKLYQFNPADFNYVVVINILLKALVAAPLPDFNLCISLLGEAPLPTVPVKAEKEATTTDADNAGSLSGDDDDDEVVEKPKDVASAGHLTDPLIVRLSQLSTLLFQARFREFWSTLASESYSDVRDYAAKISEFENAARRVALNSVKGSFTSISEKRIANYLNLSGSQLAEFINAQDGWKLADGTVSVPANPDNEIKATVIREEISLDQMHKFLAQAQSPLLRA.

Residues 52 to 263 (YDLLANLAIL…EIKATVIREE (212 aa)) form the PCI domain. The segment at 114 to 135 (EATTTDADNAGSLSGDDDDDEV) is disordered.

This sequence belongs to the eIF-3 subunit K family. In terms of assembly, component of the eukaryotic translation initiation factor 3 (eIF-3) complex.

It localises to the cytoplasm. In terms of biological role, component of the eukaryotic translation initiation factor 3 (eIF-3) complex, which is involved in protein synthesis of a specialized repertoire of mRNAs and, together with other initiation factors, stimulates binding of mRNA and methionyl-tRNAi to the 40S ribosome. The eIF-3 complex specifically targets and initiates translation of a subset of mRNAs involved in cell proliferation. In Mycosarcoma maydis (Corn smut fungus), this protein is Eukaryotic translation initiation factor 3 subunit K.